The primary structure comprises 280 residues: uncharacterized protein (280 aa).

It belongs to the herpesviridae BDLF2 family.

This is an uncharacterized protein from Saimiri sciureus (Common squirrel monkey).